Consider the following 316-residue polypeptide: MNQLEALKQFTVVVADSGDIDSIRQFSPQDATTNPSLILKAATLPQYQPLFDDAIAYANLQGGSPETRLINASDRLAVNIGAEVLKSIPGRISTEVDARLSFDRGMCVAKARKLIGMYQEKDIPRSRILIKLAATWEGIRAAEELEKEGINCNLTLLFSFAQARACAEAGVFLISPFVGRIYDWYQEKQPTSDYQAESDPGVISVRDIYDYYKRHRYQTVIMGASFRKVEQILALAGCDRLTISPALLEQLKNSSDPVERQLTPSTEAFHPPSPLSEAEFRWEHHQDAMAVDKLAEGIRLFAADQQKLEALLAAKL.

K131 serves as the catalytic Schiff-base intermediate with substrate.

The protein belongs to the transaldolase family. Type 1 subfamily. As to quaternary structure, homodimer.

It is found in the cytoplasm. It catalyses the reaction D-sedoheptulose 7-phosphate + D-glyceraldehyde 3-phosphate = D-erythrose 4-phosphate + beta-D-fructose 6-phosphate. It functions in the pathway carbohydrate degradation; pentose phosphate pathway; D-glyceraldehyde 3-phosphate and beta-D-fructose 6-phosphate from D-ribose 5-phosphate and D-xylulose 5-phosphate (non-oxidative stage): step 2/3. Transaldolase is important for the balance of metabolites in the pentose-phosphate pathway. The protein is Transaldolase 1 of Pectobacterium atrosepticum (strain SCRI 1043 / ATCC BAA-672) (Erwinia carotovora subsp. atroseptica).